The sequence spans 491 residues: Chromosomal replication initiator protein DnaA (491 aa).

Positions 1–69 are domain I, interacts with DnaA modulators; that stretch reads MTTWNKCLKK…TIQEFHDGDL (69 aa). The domain II stretch occupies residues 69-154; sequence LLIEYSNKKF…KDDQEYSFGL (86 aa). Residues 106 to 126 form a disordered region; it reads DSEETSLNQEPKKSQKKLSSK. The interval 155-371 is domain III, AAA+ region; sequence PLKEKYVFDS…GALNRVLTTS (217 aa). Positions 199, 201, 202, and 203 each coordinate ATP. The domain IV, binds dsDNA stretch occupies residues 372–491; sequence KFNHKDPTIE…YELLLDKISR (120 aa).

This sequence belongs to the DnaA family. Oligomerizes as a right-handed, spiral filament on DNA at oriC.

It localises to the cytoplasm. Plays an essential role in the initiation and regulation of chromosomal replication. ATP-DnaA binds to the origin of replication (oriC) to initiate formation of the DNA replication initiation complex once per cell cycle. Binds the DnaA box (a 9 base pair repeat at the origin) and separates the double-stranded (ds)DNA. Forms a right-handed helical filament on oriC DNA; dsDNA binds to the exterior of the filament while single-stranded (ss)DNA is stabiized in the filament's interior. The ATP-DnaA-oriC complex binds and stabilizes one strand of the AT-rich DNA unwinding element (DUE), permitting loading of DNA polymerase. After initiation quickly degrades to an ADP-DnaA complex that is not apt for DNA replication. Binds acidic phospholipids. The sequence is that of Chromosomal replication initiator protein DnaA from Francisella philomiragia subsp. philomiragia (strain ATCC 25017 / CCUG 19701 / FSC 153 / O#319-036).